A 420-amino-acid chain; its full sequence is UDP-N-acetylglucosamine 1-carboxyvinyltransferase (420 aa).

22-23 (KN) serves as a coordination point for phosphoenolpyruvate. Arginine 93 contacts UDP-N-acetyl-alpha-D-glucosamine. Residue cysteine 117 is the Proton donor of the active site. Cysteine 117 carries the post-translational modification 2-(S-cysteinyl)pyruvic acid O-phosphothioketal. UDP-N-acetyl-alpha-D-glucosamine-binding residues include aspartate 307 and valine 329.

The protein belongs to the EPSP synthase family. MurA subfamily.

The protein resides in the cytoplasm. It carries out the reaction phosphoenolpyruvate + UDP-N-acetyl-alpha-D-glucosamine = UDP-N-acetyl-3-O-(1-carboxyvinyl)-alpha-D-glucosamine + phosphate. Its pathway is cell wall biogenesis; peptidoglycan biosynthesis. Functionally, cell wall formation. Adds enolpyruvyl to UDP-N-acetylglucosamine. The chain is UDP-N-acetylglucosamine 1-carboxyvinyltransferase from Marinobacter nauticus (strain ATCC 700491 / DSM 11845 / VT8) (Marinobacter aquaeolei).